Reading from the N-terminus, the 171-residue chain is Lipoprotein signal peptidase (171 aa).

3 consecutive transmembrane segments (helical) span residues 12–32 (WYWV…WVLA), 67–87 (WQRW…TVWL), and 93–113 (SLLK…GNLV). Catalysis depends on residues Asp-123 and Asp-141. A helical transmembrane segment spans residues 137 to 157 (FNIADSAICIGAVLIIWDAFL).

The protein belongs to the peptidase A8 family.

It is found in the cell inner membrane. The catalysed reaction is Release of signal peptides from bacterial membrane prolipoproteins. Hydrolyzes -Xaa-Yaa-Zaa-|-(S,diacylglyceryl)Cys-, in which Xaa is hydrophobic (preferably Leu), and Yaa (Ala or Ser) and Zaa (Gly or Ala) have small, neutral side chains.. It participates in protein modification; lipoprotein biosynthesis (signal peptide cleavage). Functionally, this protein specifically catalyzes the removal of signal peptides from prolipoproteins. The sequence is that of Lipoprotein signal peptidase from Shewanella baltica (strain OS223).